The following is a 99-amino-acid chain: MSESKKYEITYIVRPDIDDAAKTALVDRFDKILTDNGAQVIDSKDWSKRRFAYEIGGFNEGTYHIVNLTATDDAALNEFDRLSKINDDILRHMIVKRED.

Belongs to the bacterial ribosomal protein bS6 family.

Functionally, binds together with bS18 to 16S ribosomal RNA. The polypeptide is Small ribosomal subunit protein bS6 (Lactiplantibacillus plantarum (strain ATCC BAA-793 / NCIMB 8826 / WCFS1) (Lactobacillus plantarum)).